Here is a 365-residue protein sequence, read N- to C-terminus: Protein dbl-1 (365 aa).

The N-terminal stretch at 1–42 (MNDSVRTTTTISSTKSLVHSFQLSAILHLFLLISFTPMSAAA) is a signal peptide. The propeptide occupies 43-244 (DQHASHATRR…KRSAQTGNSE (202 aa)). N-linked (GlcNAc...) asparagine glycosylation is found at N110, N143, and N167. Residues 231–259 (SVRRKRSAQTGNSERKNRKKGRKHHNTEA) are disordered. The span at 246 to 255 (KNRKKGRKHH) shows a compositional bias: basic residues. 3 disulfide bridges follow: C264/C330, C293/C362, and C297/C364. An N-linked (GlcNAc...) asparagine glycan is attached at N306.

Belongs to the TGF-beta family. Homodimer; disulfide-linked. Interacts with drag-1. Expressed in embryos just prior to hatching and remains constant in most cells throughout the larval and adult stages. Expressed by AVA command interneurons.

The protein localises to the secreted. Ligand for the serine/threonine-protein kinase receptor type-1 sma-6 which activates a TGF-beta-like signaling pathway. Multifunctional protein that is involved in body size, male ectodermal patterning, innate immunity, lipid metabolism and neural plasticity. Dose-dependent regulator of body size, probably influencing the sizes of some or all cells rather than their number. Plays a role in patterning of male-specific genital sensilla (simple sense organs), known as rays, and mating-associated structures, spicules. Plays a protective role in response to infection by the Gram-negative bacterium S.marcescens, by activating expression of genes involved in innate immunity. Regulator of lipid homeostasis, acting non cell-autonomously in the hypodermis; partly dependent on the Insulin/IGF-1-like signaling (IIS) mediated pathway. Required for aversive olfactory learning of pathogenic bacteria in adults. Involved in gland cell morphology, possibly via activation of a Smad-independent TGF-beta signaling pathway. Required to oppose the autoregulation of expression of Runt-related transcription factor rnt-1. The polypeptide is Protein dbl-1 (Caenorhabditis elegans).